A 101-amino-acid polypeptide reads, in one-letter code: Integration host factor subunit beta (101 aa).

Residues 57–76 form a disordered region; sequence PARAGRNPRTGEHVPVDQKS.

Belongs to the bacterial histone-like protein family. Heterodimer of an alpha and a beta chain.

In terms of biological role, this protein is one of the two subunits of integration host factor, a specific DNA-binding protein that functions in genetic recombination as well as in transcriptional and translational control. This Nitrobacter winogradskyi (strain ATCC 25391 / DSM 10237 / CIP 104748 / NCIMB 11846 / Nb-255) protein is Integration host factor subunit beta.